A 527-amino-acid polypeptide reads, in one-letter code: ATP-dependent RNA helicase DBP3 (527 aa).

Residues 1–11 (MSKDHKDKKRK) are compositionally biased toward basic residues. Residues 1–89 (MSKDHKDKKR…TGYSQSPALT (89 aa)) form a disordered region. Positions 12–24 (HSDEATEEVEKKT) are enriched in basic and acidic residues. A compositionally biased stretch (basic residues) spans 25-44 (KVSKKEKKDKKEKKEKKDKK). Residues 45–71 (EKKDKSEKKDKSEKKEKKEKKESEDVP) are compositionally biased toward basic and acidic residues. Polar residues predominate over residues 72 to 89 (TKSSAVVSTGYSQSPALT). Residues 119 to 145 (LGFDQIDLDSRIASVISKFPTPTPIQA) carry the Q motif motif. Residues 148-319 (WPYLLSGKDV…STFMNSPVKV (172 aa)) enclose the Helicase ATP-binding domain. Residue 161–168 (AETGSGKT) coordinates ATP. A DEAD box motif is present at residues 266 to 269 (DEAD). The Helicase C-terminal domain maps to 348-497 (KLLSLLRKYQ…PVPDELLKFG (150 aa)).

This sequence belongs to the DEAD box helicase family. DDX5/DBP2 subfamily.

The protein localises to the nucleus. It is found in the nucleolus. It carries out the reaction ATP + H2O = ADP + phosphate + H(+). ATP-dependent RNA helicase required for 60S ribosomal subunit synthesis. Involved in efficient pre-rRNA processing, predominantly at site A3, which is necessary for the normal formation of 25S and 5.8S rRNAs. In Debaryomyces hansenii (strain ATCC 36239 / CBS 767 / BCRC 21394 / JCM 1990 / NBRC 0083 / IGC 2968) (Yeast), this protein is ATP-dependent RNA helicase DBP3 (DBP3).